Here is a 445-residue protein sequence, read N- to C-terminus: Phospho-alpha-glucosidase PagL (445 aa).

Residue 4–71 (YSICIVGGGS…ELEEVIWTTD (68 aa)) coordinates NAD(+). Substrate contacts are provided by Arg94 and Asn148. Cys171 contributes to the Mn(2+) binding site. Asp172 (proton donor) is an active-site residue. His201 is a binding site for Mn(2+). The active-site Proton acceptor is the Tyr264. Substrate is bound at residue Arg284.

This sequence belongs to the glycosyl hydrolase 4 family. As to quaternary structure, homotetramer. NAD(+) serves as cofactor. Mn(2+) is required as a cofactor.

Its function is as follows. Phospho-alpha-glucosidase that catalyzes the hydrolysis of p-nitrophenyl-alpha-D-glucopyranoside 6-phosphate, but is not able to cleave 'natural' phospho-alpha-glucosides produced via the phosphoenolpyruvate-dependent sugar phosphotransferase system (PEP-PTS). This chain is Phospho-alpha-glucosidase PagL (pagL), found in Clostridium acetobutylicum (strain ATCC 824 / DSM 792 / JCM 1419 / IAM 19013 / LMG 5710 / NBRC 13948 / NRRL B-527 / VKM B-1787 / 2291 / W).